We begin with the raw amino-acid sequence, 108 residues long: MEQFECITVEEAYQKLRQGAAVLVDIRDPQSYAMGHAPQAFHLTNDTLGAFMRKHGFDTAVMVMCYHGNSSKGAAQYLLQQGYDAVYSIDGGFEAWHRRFPANVANGA.

In terms of domain architecture, Rhodanese spans 17–105 (RQGAAVLVDI…WHRRFPANVA (89 aa)). Cysteine 65 acts as the Cysteine persulfide intermediate in catalysis.

This sequence belongs to the GlpE family.

The protein localises to the cytoplasm. The catalysed reaction is thiosulfate + hydrogen cyanide = thiocyanate + sulfite + 2 H(+). It carries out the reaction thiosulfate + [thioredoxin]-dithiol = [thioredoxin]-disulfide + hydrogen sulfide + sulfite + 2 H(+). Functionally, transferase that catalyzes the transfer of sulfur from thiosulfate to thiophilic acceptors such as cyanide or dithiols. May function in a CysM-independent thiosulfate assimilation pathway by catalyzing the conversion of thiosulfate to sulfite, which can then be used for L-cysteine biosynthesis. The polypeptide is Thiosulfate sulfurtransferase GlpE (Salmonella agona (strain SL483)).